Here is a 381-residue protein sequence, read N- to C-terminus: 5-cytosine rRNA methyltransferase NSUN4 (381 aa).

A mitochondrion-targeting transit peptide spans 1-25; sequence MAAPVLRCVRKLLKLVDFTPVPRRY. Residues G182, G183, K184, and D201 each contribute to the S-adenosyl-L-methionine site. S203 carries the phosphoserine modification. S-adenosyl-L-methionine contacts are provided by R206, D234, G235, and D252. Residue C307 is the Nucleophile of the active site.

This sequence belongs to the class I-like SAM-binding methyltransferase superfamily. RsmB/NOP family. As to quaternary structure, heterodimer with MTERFD2/MTERF4; this interaction seems to be required for NSUN4 recruitment to the mitochondrial large ribosomal subunit.

It localises to the mitochondrion. The catalysed reaction is a cytidine in rRNA + S-adenosyl-L-methionine = a 5-methylcytidine in rRNA + S-adenosyl-L-homocysteine + H(+). The enzyme catalyses a cytidine in mRNA + S-adenosyl-L-methionine = a 5-methylcytidine in mRNA + S-adenosyl-L-homocysteine + H(+). Functionally, mitochondrial RNA cytosine C(5)-methyltransferase that methylates cytosine to 5-methylcytosine (m5C) in various RNAs, such as rRNAs, mRNAs and some long non-coding RNAs (lncRNAs). Involved in mitochondrial ribosome small subunit (SSU) maturation by catalyzing methylation of mitochondrial 12S rRNA; the function is independent of MTERFD2/MTERF4 and assembled mitochondrial ribosome large subunit (LSU). Targeted to LSU by MTERFD2/MTERF4 and probably is involved in a final step in ribosome biogenesis to ensure that SSU and LSU are assembled. In vitro can methylate 16S rRNA of the LSU; the methylation is enhanced by MTERFD/MTERF4. Also acts as a regulator of innate immunity by marking double-stranded mitochondrial RNAs(mt-dsRNAs) generated in response to stress: catalyzes m5C modification on mitochondrial RNAs, such as a mRNAs and lncRNAs, with a preference for the termini of light-strand lncRNAs, promoting their degradation and cytosolic release. Modified light-strand lncRNAs are then recognized by C1QBP reader and recruited to the mitochondrial degradosome complex, which promotes their degradation. This chain is 5-cytosine rRNA methyltransferase NSUN4, found in Mus musculus (Mouse).